We begin with the raw amino-acid sequence, 168 residues long: Bcl2-associated agonist of cell death (168 aa).

N-acetylmethionine is present on methionine 1. Residues 1-105 (MFQIPEFEPS…RSRSAPPNLW (105 aa)) are disordered. Serine 25 is modified (phosphoserine). The segment covering 49–60 (SHQQEQPTSSSH) has biased composition (polar residues). 2 positions are modified to phosphoserine: serine 75 and serine 91. An asymmetric dimethylarginine; by PRMT1 mark is found at arginine 94 and arginine 96. The residue at position 97 (serine 97) is a Phosphoserine. A Phosphoserine; by PKA, PKB, PAK1, RPS6KA1, RPS6KB1 and PKC/PRKCQ modification is found at serine 99. The residue at position 99 (serine 99) is a Phosphoserine; by PKB/AKT1. The BH3 signature appears at 110–124 (YGRELRRMSDEFVDS). Phosphoserine occurs at positions 118 and 134. The segment at 125–145 (FKKGLPRPKSAGTATQMRQSS) is disordered. Positions 136–145 (GTATQMRQSS) are enriched in polar residues. Arginine 161 bears the Omega-N-methylarginine mark.

It belongs to the Bcl-2 family. Forms heterodimers with the anti-apoptotic proteins, Bcl-X(L), Bcl-2 and Bcl-W. Also binds protein S100A10. The Ser-75/Ser-99 phosphorylated form binds 14-3-3 proteins. Interacts with AKT1 and PIM3. Interacts (via BH3 domain) with NOL3 (via CARD domain); preventing the association of BAD with BCL2. Interacts with HIF3A (via C-terminus domain); the interaction reduces the binding between BAD and BAX. Interacts with GIMAP3/IAN4 and GIMAP5/IAN5. Post-translationally, phosphorylated on one or more of Ser-75, Ser-99, Ser-118 and Ser-134 in response to survival stimuli, which blocks its pro-apoptotic activity. Phosphorylation on Ser-99 or Ser-75 promotes heterodimerization with 14-3-3 proteins. This interaction then facilitates the phosphorylation at Ser-118, a site within the BH3 motif, leading to the release of Bcl-X(L) and the promotion of cell survival. Ser-99 is the major site of AKT/PKB phosphorylation, Ser-118 the major site of protein kinase A (CAPK) phosphorylation. Phosphorylation at Ser-99 by PKB/AKT1 is almost completely blocked by the apoptotic C-terminus cleavage product of PKN2 generated by caspases-3 activity during apoptosis. Methylation at Arg-94 and Arg-96 by PRMT1 inhibits Akt-mediated phosphorylation at Ser-99. As to expression, expressed in a wide variety of tissues.

The protein localises to the mitochondrion outer membrane. The protein resides in the cytoplasm. Functionally, promotes cell death. Successfully competes for the binding to Bcl-X(L), Bcl-2 and Bcl-W, thereby affecting the level of heterodimerization of these proteins with BAX. Can reverse the death repressor activity of Bcl-X(L), but not that of Bcl-2. Appears to act as a link between growth factor receptor signaling and the apoptotic pathways. The sequence is that of Bcl2-associated agonist of cell death (BAD) from Homo sapiens (Human).